A 386-amino-acid polypeptide reads, in one-letter code: Galactokinase (386 aa).

35–38 (EHTD) is a binding site for substrate. Residues Ser69 and 125-131 (GAGLSSS) contribute to the ATP site. Residues Ser131 and Glu163 each coordinate Mg(2+). Residue Asp175 is the Proton acceptor of the active site. Tyr224 lines the substrate pocket.

Belongs to the GHMP kinase family. GalK subfamily.

The protein localises to the cytoplasm. It catalyses the reaction alpha-D-galactose + ATP = alpha-D-galactose 1-phosphate + ADP + H(+). It participates in carbohydrate metabolism; galactose metabolism. In terms of biological role, catalyzes the transfer of the gamma-phosphate of ATP to D-galactose to form alpha-D-galactose-1-phosphate (Gal-1-P). This chain is Galactokinase, found in Vibrio vulnificus (strain CMCP6).